The chain runs to 169 residues: Mitochondrial ATP-independent inner membrane protease subunit 1b (169 aa).

Catalysis depends on residues Ser-47 and Lys-91.

It belongs to the peptidase S26 family. IMP1 subfamily. Heterodimer of 2 subunits, IMP1A/B and IMP12.

Its subcellular location is the mitochondrion inner membrane. Its function is as follows. Catalyzes the removal of transit peptides required for the targeting of proteins from the mitochondrial matrix, across the inner membrane, into the inter-membrane space. This chain is Mitochondrial ATP-independent inner membrane protease subunit 1b, found in Arabidopsis thaliana (Mouse-ear cress).